Consider the following 62-residue polypeptide: MVILFQLALLLLVVMSFVLIVGVPVLYATNGDRVQSNRLILVGGLAWTALVVLVGVLNYFVV.

2 helical membrane passes run 8-28 and 41-61; these read ALLLLVVMSFVLIVGVPVLYA and LVGGLAWTALVVLVGVLNYFV.

It belongs to the PsbZ family. PSII is composed of 1 copy each of membrane proteins PsbA, PsbB, PsbC, PsbD, PsbE, PsbF, PsbH, PsbI, PsbJ, PsbK, PsbL, PsbM, PsbT, PsbX, PsbY, PsbZ, Psb30/Ycf12, peripheral proteins PsbO, CyanoQ (PsbQ), PsbU, PsbV and a large number of cofactors. It forms dimeric complexes.

It is found in the cellular thylakoid membrane. May control the interaction of photosystem II (PSII) cores with the light-harvesting antenna, regulates electron flow through the 2 photosystem reaction centers. PSII is a light-driven water plastoquinone oxidoreductase, using light energy to abstract electrons from H(2)O, generating a proton gradient subsequently used for ATP formation. This Synechococcus elongatus (strain ATCC 33912 / PCC 7942 / FACHB-805) (Anacystis nidulans R2) protein is Photosystem II reaction center protein Z.